The following is a 168-amino-acid chain: MPRSRINANFIDKTSTIVANILLRIIPTTSGEKEAFTYYRDGMSAQSEGNYAEALQNYYEATRPEIDPYDRSYILYNIGLIHTSNGEHTKALEYYFRALERNPFLPQAFNNMAVICHYRGEQAIRQGDSEIAEAWSDQAAEYWKQAIALTPGNYIEAQNWLKITRRFE.

TPR repeat units lie at residues 35-68, 72-105, and 120-153; these read AFTY…EIDP, SYIL…NPFL, and GEQA…TPGN.

The protein belongs to the Ycf3 family.

Its subcellular location is the plastid. It localises to the chloroplast thylakoid membrane. Its function is as follows. Essential for the assembly of the photosystem I (PSI) complex. May act as a chaperone-like factor to guide the assembly of the PSI subunits. The protein is Photosystem I assembly protein Ycf3 of Acorus calamus var. americanus (American sweet flag).